We begin with the raw amino-acid sequence, 278 residues long: Neuronal membrane glycoprotein M6-a (278 aa).

Position 1 is an N-acetylmethionine (Met-1). Over 1–22 (MEENMEEGQTQKGCFECCIKCL) the chain is Cytoplasmic. The helical transmembrane segment at 23–43 (GGIPYASLIATILLYAGVALF) threads the bilayer. Residues 44 to 84 (CGCGHEALSGTVNILQTYFEMARTAGDTLDVFTMIDIFKYV) are Extracellular-facing. Residues 85–105 (IYGIAAAFFVYGILLMVEGFF) traverse the membrane as a helical segment. The Cytoplasmic portion of the chain corresponds to 106 to 127 (TTGAIKDLYGDFKITTCGRCVS). The chain crosses the membrane as a helical span at residues 128–148 (AWFIMLTYLFMLAWLGVTAFT). Topologically, residues 149-213 (SLPVYMYFNV…STELNMTFHL (65 aa)) are extracellular. Residue Asn-164 is glycosylated (N-linked (GlcNAc...) asparagine). Residues Cys-174 and Cys-192 are joined by a disulfide bond. An N-linked (GlcNAc...) asparagine glycan is attached at Asn-208. The chain crosses the membrane as a helical span at residues 214–234 (FIVALAGAGAAVIAMVHYLMV). Residues 235-278 (LSANWAYVKDACRMQKYEDIKSKEEQELHDIHSTRSKERLNAYT) lie on the Cytoplasmic side of the membrane. Position 256 is a phosphoserine (Ser-256). At Thr-278 the chain carries Phosphothreonine.

This sequence belongs to the myelin proteolipid protein family. As to quaternary structure, interacts with OPRM1. Interacts with palmitoyltransferase ZDHHC17/HIP14; the interaction leads to palmitoylation of GPM6A. Post-translationally, N-glycosylated. In terms of processing, palmitoylated by ZDHHC17/HIP14. Expressed in hippocampus (at protein level). Isoform 1 is the predominant isoform expressed in brain, specifically in hippocampus. Isoform 2 is expressed at low levels in brain and kidney.

The protein resides in the cell membrane. It is found in the cell projection. It localises to the axon. Its subcellular location is the growth cone. The protein localises to the dendritic spine. The protein resides in the filopodium. It is found in the neuron projection. Its function is as follows. Involved in neuronal differentiation, including differentiation and migration of neuronal stem cells. Plays a role in neuronal plasticity and is involved in neurite and filopodia outgrowth, filopodia motility and probably synapse formation. Gpm6a-induced filopodia formation involves mitogen-activated protein kinase (MAPK) and Src signaling pathways. May be involved in neuronal NGF-dependent Ca(2+) influx. May be involved in regulation of endocytosis and intracellular trafficking of G-protein-coupled receptors (GPCRs); enhances internalization and recycling of mu-type opioid receptor. This chain is Neuronal membrane glycoprotein M6-a (Gpm6a), found in Rattus norvegicus (Rat).